A 228-amino-acid polypeptide reads, in one-letter code: uncharacterized protein (228 aa).

Residues 77–79, G113, V133, and 140–142 contribute to the S-adenosyl-L-methionine site; these read TTA and PSL.

This sequence belongs to the class IV-like SAM-binding methyltransferase superfamily. RNA methyltransferase TrmH family.

This is an uncharacterized protein from Escherichia coli (strain K12).